The primary structure comprises 201 residues: 3-isopropylmalate dehydratase small subunit (201 aa).

It belongs to the LeuD family. LeuD type 1 subfamily. In terms of assembly, heterodimer of LeuC and LeuD.

The catalysed reaction is (2R,3S)-3-isopropylmalate = (2S)-2-isopropylmalate. The protein operates within amino-acid biosynthesis; L-leucine biosynthesis; L-leucine from 3-methyl-2-oxobutanoate: step 2/4. Its function is as follows. Catalyzes the isomerization between 2-isopropylmalate and 3-isopropylmalate, via the formation of 2-isopropylmaleate. This chain is 3-isopropylmalate dehydratase small subunit, found in Methylorubrum populi (strain ATCC BAA-705 / NCIMB 13946 / BJ001) (Methylobacterium populi).